The following is a 727-amino-acid chain: Prolyl endopeptidase-like (727 aa).

Residues serine 559, aspartate 645, and histidine 690 each act as charge relay system in the active site.

Belongs to the peptidase S9A family. In terms of assembly, homodimer. Interacts with the AP-1 complex.

Its subcellular location is the cytoplasm. It is found in the cytosol. It localises to the golgi apparatus. The protein resides in the trans-Golgi network. The protein localises to the cytoskeleton. Its subcellular location is the nucleus. In terms of biological role, serine peptidase whose precise substrate specificity remains unclear. Does not cleave peptides after a arginine or lysine residue. Regulates trans-Golgi network morphology and sorting by regulating the membrane binding of the AP-1 complex. May play a role in the regulation of synaptic vesicle exocytosis. This Pongo abelii (Sumatran orangutan) protein is Prolyl endopeptidase-like (PREPL).